Reading from the N-terminus, the 195-residue chain is Peroxiredoxin bcp1 (195 aa).

The Thioredoxin domain maps to 46–168; sequence IQVGDVIPDI…SHWIFEKGTG (123 aa). Cys89 (cysteine sulfenic acid (-SOH) intermediate) is an active-site residue. Cys89 and Cys94 form a disulfide bridge.

It belongs to the peroxiredoxin family. BCP/PrxQ subfamily. In terms of assembly, monomer. In terms of processing, the active site is a conserved redox-active cysteine residue, the peroxidatic cysteine (C(P)), which makes the nucleophilic attack on the peroxide substrate. The peroxide oxidizes the C(P)-SH to cysteine sulfenic acid (C(P)-SOH), which then reacts with another cysteine residue, the resolving cysteine (C(R)), to form a disulfide bridge. The disulfide is subsequently reduced by an appropriate electron donor to complete the catalytic cycle. In this atypical 2-Cys peroxiredoxin, C(R) is present in the same subunit to form an intramolecular disulfide. The disulfide is subsequently reduced by thioredoxin.

The protein resides in the cytoplasm. Its subcellular location is the nucleus. It carries out the reaction a hydroperoxide + [thioredoxin]-dithiol = an alcohol + [thioredoxin]-disulfide + H2O. In terms of biological role, thiol-specific peroxidase that catalyzes the reduction of hydrogen peroxide and organic hydroperoxides to water and alcohols, respectively. Plays a role in cell protection against oxidative stress by detoxifying peroxides and as sensor of hydrogen peroxide-mediated signaling events. Acts as a scavenger of H(2)O(2). In Schizosaccharomyces pombe (strain 972 / ATCC 24843) (Fission yeast), this protein is Peroxiredoxin bcp1 (bcp1).